We begin with the raw amino-acid sequence, 393 residues long: Phosphoglycerate kinase (393 aa).

Residues 21–23 (DMN), R36, 59–62 (HLGR), R114, and R147 each bind substrate. ATP-binding positions include K198, E320, and 346-349 (GGDT).

This sequence belongs to the phosphoglycerate kinase family. As to quaternary structure, monomer.

It is found in the cytoplasm. It catalyses the reaction (2R)-3-phosphoglycerate + ATP = (2R)-3-phospho-glyceroyl phosphate + ADP. The protein operates within carbohydrate degradation; glycolysis; pyruvate from D-glyceraldehyde 3-phosphate: step 2/5. The sequence is that of Phosphoglycerate kinase from Thiobacillus denitrificans (strain ATCC 25259 / T1).